We begin with the raw amino-acid sequence, 452 residues long: Lamina-associated polypeptide 2, isoform beta (452 aa).

Positions 1 to 409 (MPEFLEDPSV…KSEKTKKGRS (409 aa)) are nucleoplasmic. Residues 5–48 (LEDPSVLTKDKLKSELVANNVTLPAGEQRKDVYVQLYLQHLTAR) form the LEM-like domain. Disordered stretches follow at residues 48 to 113 (RNRP…DVTE) and 149 to 264 (REQG…VEPS). The linker stretch occupies residues 49–107 (NRPPLAAGANSKGPPDFSSDEEREPTPVLGSGASVGRGRGAVGRKATKKTDKPRPEDKD). A phosphoserine mark is found at S66 and S67. T74 bears the Phosphothreonine mark. S82 is modified (phosphoserine). Omega-N-methylarginine occurs at positions 85 and 87. Over residues 96–105 (KKTDKPRPED) the composition is skewed to basic and acidic residues. In terms of domain architecture, LEM spans 108–152 (DLDVTELSNEELLEQLVRYGVNPGPIVGTTRKLYEKKLLKLREQG). An NAKAP95-binding N region spans residues 137 to 242 (TRKLYEKKLL…TSGSSKGGPL (106 aa)). Positions 154 to 177 (ESRSSTPLPTVSSSAENTRQNGSN) are enriched in polar residues. Phosphoserine occurs at positions 155 and 158. Phosphothreonine is present on T159. Phosphoserine is present on residues S165, S167, S176, S179, and S183. The segment covering 178–202 (DSDRYSDNDEDSKIELKLEKREPLK) has biased composition (basic and acidic residues). K206 carries the post-translational modification N6-acetyllysine. Residues 298–370 (TGNFKHASSI…SCRRPIKGAA (73 aa)) are binds lamins B. The tract at residues 299 to 373 (GNFKHASSIL…RPIKGAAGRP (75 aa)) is NAKAP95-binding C. Phosphoserine occurs at positions 305, 306, and 361. The residue at position 388 (K388) is an N6-acetyllysine. The chain crosses the membrane as a helical; Signal-anchor for type II membrane protein span at residues 410-430 (VPMWIKMLLFALVAGFLFLVY). Over 431–452 (QAMETNQGNPFTNFLQDTKISN) the chain is Lumenal.

This sequence belongs to the LEM family. In terms of assembly, interacts with LMNB1, LMNB2, BANF1, AKAP8L, GMCL and chromosomes. In terms of processing, mitosis-specific phosphorylation specifically abolishes its binding to lamin B and chromosomes.

Its subcellular location is the nucleus inner membrane. The protein localises to the chromosome. In terms of biological role, binds directly to lamin B1 and chromosomes in a mitotic phosphorylation-regulated manner. May play an important role in nuclear envelope reassembly at the end of mitosis and/or anchoring of the nuclear lamina and interphase chromosomes to the nuclear envelope. The sequence is that of Lamina-associated polypeptide 2, isoform beta (Tmpo) from Rattus norvegicus (Rat).